Here is a 449-residue protein sequence, read N- to C-terminus: Neuraminidase (449 aa).

Residues Met1 to Lys6 lie on the Intravirion side of the membrane. A helical transmembrane segment spans residues Ile7–Gly27. Positions Gly11–Trp33 are involved in apical transport and lipid raft association. The Virion surface portion of the chain corresponds to Asn28–Lys449. The interval His36–Ser70 is hypervariable stalk region. A glycan (N-linked (GlcNAc...) asparagine; by host) is linked at Asn68. Positions Leu71–Lys449 are head of neuraminidase. Disulfide bonds link Cys72/Cys397, Cys104/Cys109, Cys164/Cys211, Cys213/Cys218, Cys259/Cys272, Cys261/Cys270, Cys298/Cys315, and Cys401/Cys426. Arg98 lines the substrate pocket. N-linked (GlcNAc...) asparagine; by host glycosylation occurs at Asn126. The active-site Proton donor/acceptor is Asp131. Residue Arg132 participates in substrate binding. Asn215 carries an N-linked (GlcNAc...) asparagine; by host glycan. Residue Glu257–Glu258 coordinates substrate. Arg273 provides a ligand contact to substrate. Positions 274, 278, and 304 each coordinate Ca(2+). Residue Arg348 coordinates substrate. The active-site Nucleophile is Tyr382.

This sequence belongs to the glycosyl hydrolase 34 family. As to quaternary structure, homotetramer. It depends on Ca(2+) as a cofactor. In terms of processing, N-glycosylated.

Its subcellular location is the virion membrane. The protein localises to the host apical cell membrane. It carries out the reaction Hydrolysis of alpha-(2-&gt;3)-, alpha-(2-&gt;6)-, alpha-(2-&gt;8)- glycosidic linkages of terminal sialic acid residues in oligosaccharides, glycoproteins, glycolipids, colominic acid and synthetic substrates.. Its activity is regulated as follows. Inhibited by the neuraminidase inhibitors zanamivir (Relenza) and oseltamivir (Tamiflu). These drugs interfere with the release of progeny virus from infected cells and are effective against all influenza strains. Resistance to neuraminidase inhibitors is quite rare. Its function is as follows. Catalyzes the removal of terminal sialic acid residues from viral and cellular glycoconjugates. Cleaves off the terminal sialic acids on the glycosylated HA during virus budding to facilitate virus release. Additionally helps virus spread through the circulation by further removing sialic acids from the cell surface. These cleavages prevent self-aggregation and ensure the efficient spread of the progeny virus from cell to cell. Otherwise, infection would be limited to one round of replication. Described as a receptor-destroying enzyme because it cleaves a terminal sialic acid from the cellular receptors. May facilitate viral invasion of the upper airways by cleaving the sialic acid moieties on the mucin of the airway epithelial cells. Likely to plays a role in the budding process through its association with lipid rafts during intracellular transport. May additionally display a raft-association independent effect on budding. Plays a role in the determination of host range restriction on replication and virulence. Sialidase activity in late endosome/lysosome traffic seems to enhance virus replication. The sequence is that of Neuraminidase from Aves (Cat).